A 599-amino-acid polypeptide reads, in one-letter code: Flap endonuclease GEN-like 1 (599 aa).

The tract at residues 1–96 is N-domain; it reads MGVGGNFWDL…ISRFFRSSGI (96 aa). Residues 2-95 are XPG-N domain; sequence GVGGNFWDLL…RISRFFRSSG (94 aa). Mg(2+)-binding residues include Asp-31, Asp-75, Glu-140, Glu-142, Asp-161, Asp-163, and Asp-213. An XPG-I domain region spans residues 128–213; the sequence is ELLGIPVLKA…IAISLLVGND (86 aa). An I-domain region spans residues 128 to 217; sequence ELLGIPVLKA…LLVGNDYDSG (90 aa). The 5'-3' exonuclease domain stretch occupies residues 213-407; that stretch reads DYDSGGVLGI…LLPMLSTIYL (195 aa). 2 disordered regions span residues 522-545 and 559-599; these read RESK…MGVQ and AAGQ…LLFG. Polar residues-rich tracts occupy residues 563-572 and 580-590; these read SIETGGSSKA and ATSTSSSNLTK.

The protein belongs to the XPG/RAD2 endonuclease family. GEN subfamily. Mg(2+) is required as a cofactor.

The protein resides in the nucleus. Functionally, endonuclease which cleaves flap structures at the junction between single-stranded DNA and double-stranded DNA with a specific cleavage site in the 5' overhang strand exactly one nucleotide 3' of the branch point. Structure- and sequence-specific nuclease that resolves holliday junctions (HJs) by symmetrically oriented incisions in two opposing strands near the junction point, thus leading to ligatable products; HJs are physical links between homologous DNA molecules that arise as central intermediary structures during homologous recombination and repair in meiotic and somatic cells. Structure-specific nuclease with 5'-flap endonuclease activity, preferentially cleaving static flaps 5' overhang strand exactly one nucleotide in the 3' direction of the branch point. Also able to cleave double-stranded flap strand 1 exactly at the branch point. The protein is Flap endonuclease GEN-like 1 of Arabidopsis thaliana (Mouse-ear cress).